The sequence spans 318 residues: Aspartate carbamoyltransferase catalytic subunit (318 aa).

Carbamoyl phosphate contacts are provided by Arg-58 and Thr-59. Lys-86 lines the L-aspartate pocket. The carbamoyl phosphate site is built by Arg-108, His-141, and Gln-144. L-aspartate is bound by residues Arg-174 and Arg-226. The carbamoyl phosphate site is built by Gly-270 and Pro-271.

Belongs to the aspartate/ornithine carbamoyltransferase superfamily. ATCase family. Heterododecamer (2C3:3R2) of six catalytic PyrB chains organized as two trimers (C3), and six regulatory PyrI chains organized as three dimers (R2).

It carries out the reaction carbamoyl phosphate + L-aspartate = N-carbamoyl-L-aspartate + phosphate + H(+). It participates in pyrimidine metabolism; UMP biosynthesis via de novo pathway; (S)-dihydroorotate from bicarbonate: step 2/3. Its function is as follows. Catalyzes the condensation of carbamoyl phosphate and aspartate to form carbamoyl aspartate and inorganic phosphate, the committed step in the de novo pyrimidine nucleotide biosynthesis pathway. The sequence is that of Aspartate carbamoyltransferase catalytic subunit from Lactobacillus helveticus (strain DPC 4571).